The sequence spans 329 residues: 4-hydroxy-3-methylbut-2-enyl diphosphate reductase (329 aa).

C27 is a binding site for [4Fe-4S] cluster. Residues H56 and H89 each coordinate (2E)-4-hydroxy-3-methylbut-2-enyl diphosphate. H56 and H89 together coordinate dimethylallyl diphosphate. 2 residues coordinate isopentenyl diphosphate: H56 and H89. C111 is a [4Fe-4S] cluster binding site. A (2E)-4-hydroxy-3-methylbut-2-enyl diphosphate-binding site is contributed by H139. Residue H139 coordinates dimethylallyl diphosphate. Residue H139 participates in isopentenyl diphosphate binding. E141 acts as the Proton donor in catalysis. (2E)-4-hydroxy-3-methylbut-2-enyl diphosphate is bound at residue T179. Residue C209 participates in [4Fe-4S] cluster binding. S237, S238, N239, and S281 together coordinate (2E)-4-hydroxy-3-methylbut-2-enyl diphosphate. Residues S237, S238, N239, and S281 each contribute to the dimethylallyl diphosphate site. 4 residues coordinate isopentenyl diphosphate: S237, S238, N239, and S281.

The protein belongs to the IspH family. [4Fe-4S] cluster serves as cofactor.

The catalysed reaction is isopentenyl diphosphate + 2 oxidized [2Fe-2S]-[ferredoxin] + H2O = (2E)-4-hydroxy-3-methylbut-2-enyl diphosphate + 2 reduced [2Fe-2S]-[ferredoxin] + 2 H(+). It carries out the reaction dimethylallyl diphosphate + 2 oxidized [2Fe-2S]-[ferredoxin] + H2O = (2E)-4-hydroxy-3-methylbut-2-enyl diphosphate + 2 reduced [2Fe-2S]-[ferredoxin] + 2 H(+). It participates in isoprenoid biosynthesis; dimethylallyl diphosphate biosynthesis; dimethylallyl diphosphate from (2E)-4-hydroxy-3-methylbutenyl diphosphate: step 1/1. Its pathway is isoprenoid biosynthesis; isopentenyl diphosphate biosynthesis via DXP pathway; isopentenyl diphosphate from 1-deoxy-D-xylulose 5-phosphate: step 6/6. Its function is as follows. Catalyzes the conversion of 1-hydroxy-2-methyl-2-(E)-butenyl 4-diphosphate (HMBPP) into a mixture of isopentenyl diphosphate (IPP) and dimethylallyl diphosphate (DMAPP). Acts in the terminal step of the DOXP/MEP pathway for isoprenoid precursor biosynthesis. This chain is 4-hydroxy-3-methylbut-2-enyl diphosphate reductase, found in Methylibium petroleiphilum (strain ATCC BAA-1232 / LMG 22953 / PM1).